We begin with the raw amino-acid sequence, 498 residues long: Ribulose bisphosphate carboxylase large chain (498 aa).

Residues Met1 to Ser2 constitute a propeptide that is removed on maturation. Residue Pro3 is modified to N-acetylproline. Lys14 bears the N6,N6,N6-trimethyllysine mark. 2 residues coordinate substrate: Asn123 and Thr173. Lys175 serves as the catalytic Proton acceptor. Lys177 lines the substrate pocket. Residues Lys201, Asp203, and Glu204 each coordinate Mg(2+). Lys201 is modified (N6-carboxylysine). The Proton acceptor role is filled by His294. 3 residues coordinate substrate: Arg295, His327, and Ser379. The disordered stretch occupies residues Pro471–Gly498.

Belongs to the RuBisCO large chain family. Type I subfamily. In terms of assembly, heterohexadecamer of 8 large chains and 8 small chains; disulfide-linked. The disulfide link is formed within the large subunit homodimers. Mg(2+) serves as cofactor. Post-translationally, the disulfide bond which can form in the large chain dimeric partners within the hexadecamer appears to be associated with oxidative stress and protein turnover.

It localises to the plastid. It carries out the reaction 2 (2R)-3-phosphoglycerate + 2 H(+) = D-ribulose 1,5-bisphosphate + CO2 + H2O. The catalysed reaction is D-ribulose 1,5-bisphosphate + O2 = 2-phosphoglycolate + (2R)-3-phosphoglycerate + 2 H(+). Functionally, ruBisCO catalyzes two reactions: the carboxylation of D-ribulose 1,5-bisphosphate, the primary event in carbon dioxide fixation, as well as the oxidative fragmentation of the pentose substrate in the photorespiration process. Both reactions occur simultaneously and in competition at the same active site. The chain is Ribulose bisphosphate carboxylase large chain (rbcL) from Cuscuta reflexa (Southern Asian dodder).